Reading from the N-terminus, the 137-residue chain is Active regulator of SIRT1 (137 aa).

Residue arginine 7 is modified to Citrulline. Residues 14–24 (GAPEAPGAAPG) show a composition bias toward low complexity. The tract at residues 14 to 58 (GAPEAPGAAPGHTKPSQAPMKRTRKAKATQAQKLRNSAKGKVPKS) is disordered. Residue serine 84 is modified to Phosphoserine. The segment at 96-120 (RQNRGRKACDRPVTKTKKKKKAEGT) is disordered.

It belongs to the AROS family. Part of the small subunit (SSU) processome, composed of more than 70 proteins and the RNA chaperone small nucleolar RNA (snoRNA) U3. Interacts with RPS19; the interaction is direct and mediates the integration of RPS19 in state post-A1. Interacts with SIRT1. In terms of processing, citrullinated by PADI4.

Its subcellular location is the nucleus. The protein resides in the nucleolus. Functionally, part of the small subunit (SSU) processome, first precursor of the small eukaryotic ribosomal subunit. During the assembly of the SSU processome in the nucleolus, many ribosome biogenesis factors, an RNA chaperone and ribosomal proteins associate with the nascent pre-rRNA and work in concert to generate RNA folding, modifications, rearrangements and cleavage as well as targeted degradation of pre-ribosomal RNA by the RNA exosome. Acts as a chaperone that specifically mediates the integration of RPS19 in state post-A1. Direct regulator of SIRT1. Enhances SIRT1-mediated deacetylation of p53/TP53, thereby participating in inhibition of p53/TP53-mediated transcriptional activity. This Bos taurus (Bovine) protein is Active regulator of SIRT1 (RPS19BP1).